The chain runs to 352 residues: RING finger protein 39 (352 aa).

The RING-type zinc-finger motif lies at 20–67 (CPLCGGPFEDPVLLACEHSFCRSCLARCWGSPAAPGSEEATPSCPCCG). Residues 98-118 (PGARTGRRRGGRIPTMGCLDP) are disordered. The region spanning 142-352 (EDLPEDYPVV…APLRIVPGEA (211 aa)) is the B30.2/SPRY domain.

In terms of tissue distribution, expressed in the hippocampus. Expression is rapidly up-regulated in granule cells of the dentate gyrus after LTP induction.

It is found in the cytoplasm. The catalysed reaction is S-ubiquitinyl-[E2 ubiquitin-conjugating enzyme]-L-cysteine + [acceptor protein]-L-lysine = [E2 ubiquitin-conjugating enzyme]-L-cysteine + N(6)-ubiquitinyl-[acceptor protein]-L-lysine.. Its pathway is protein modification; protein ubiquitination. Its function is as follows. Plays an inhibitory role in anti-RNA viral innate immunity by targeting the adapter DDX3X and promoting its 'Lys-48'-linked polyubiquitination. Alternatively, enhances the cGAS-STING pathway activation by promoting 'Lys-63'-linked ubiquitination of STING1, facilitating the STING1-TBK1 complex formation and STING1 activation. The polypeptide is RING finger protein 39 (Rnf39) (Rattus norvegicus (Rat)).